The following is a 1478-amino-acid chain: Phospholipase B1, membrane-associated (1478 aa).

Positions 1–27 are cleaved as a signal peptide; that stretch reads MELYPGVSPVGLLLLLLLGQGPSQIHG. At 28–1422 the chain is on the extracellular side; sequence SSGENTLAWQ…KAEEPSNALY (1395 aa). Tandem repeats lie at residues 43–351, 366–711, 712–1058, and 1068–1407. Residues 43 to 1407 are 4 X 308-326 AA approximate repeats; that stretch reads WTLKNFPFPC…RPFLYTLRNS (1365 aa). Residue N180 is glycosylated (N-linked (GlcNAc...) asparagine). Active-site residues include S404 and D518. Residues N525, N626, and N637 are each glycosylated (N-linked (GlcNAc...) asparagine). H659 is an active-site residue. Residues N715, N764, N787, N801, N830, N926, N1227, N1280, N1289, and N1387 are each glycosylated (N-linked (GlcNAc...) asparagine). The segment at 1408 to 1450 is necessary for membrane localization; the sequence is QLLPDKAEEPSNALYWAVPVAAIGGLAVGILGVMLWRTVKPVQ. The chain crosses the membrane as a helical span at residues 1423–1443; the sequence is WAVPVAAIGGLAVGILGVMLW. Topologically, residues 1444-1478 are cytoplasmic; sequence RTVKPVQQEEEEEDTLPNTSVTQDAVSEKRLKAGN. Positions 1451–1478 are disordered; it reads QEEEEEDTLPNTSVTQDAVSEKRLKAGN. The span at 1459 to 1468 shows a compositional bias: polar residues; the sequence is LPNTSVTQDA. Residues 1469 to 1478 are compositionally biased toward basic and acidic residues; it reads VSEKRLKAGN.

It belongs to the 'GDSL' lipolytic enzyme family. Phospholipase B1 subfamily. In terms of processing, undergoes proteolytic cleavage in the ileum.

It localises to the apical cell membrane. The enzyme catalyses a 1,2-diacyl-sn-glycero-3-phosphocholine + H2O = a 1-acyl-sn-glycero-3-phosphocholine + a fatty acid + H(+). It catalyses the reaction a 1-O-alkyl-2-acyl-sn-glycero-3-phosphocholine + H2O = a 1-O-alkyl-sn-glycero-3-phosphocholine + a fatty acid + H(+). It carries out the reaction a 1-acyl-sn-glycero-3-phosphocholine + H2O = sn-glycerol 3-phosphocholine + a fatty acid + H(+). The catalysed reaction is a triacylglycerol + H2O = a diacylglycerol + a fatty acid + H(+). The enzyme catalyses 1,2-dihexadecanoyl-sn-glycero-3-phosphocholine + H2O = 1-hexadecanoyl-sn-glycero-3-phosphocholine + hexadecanoate + H(+). It catalyses the reaction 1-hexadecanoyl-2-(9Z-octadecenoyl)-sn-glycero-3-phosphocholine + H2O = 1-hexadecanoyl-sn-glycero-3-phosphocholine + (9Z)-octadecenoate + H(+). It carries out the reaction 1,2-di-(9Z-octadecenoyl)-sn-glycero-3-phosphocholine + H2O = 1-(9Z-octadecenoyl)-sn-glycero-3-phosphocholine + (9Z)-octadecenoate + H(+). The catalysed reaction is 1-hexadecanoyl-2-(9Z,12Z-octadecadienoyl)-sn-glycero-3-phosphocholine + H2O = (9Z,12Z)-octadecadienoate + 1-hexadecanoyl-sn-glycero-3-phosphocholine + H(+). The enzyme catalyses 1-hexadecanoyl-2-(9Z,12Z-octadecadienoyl)-sn-glycero-3-phosphocholine + H2O = 2-(9Z,12Z-octadecadienoyl)-sn-glycero-3-phosphocholine + hexadecanoate + H(+). It catalyses the reaction 1-hexadecanoyl-2-(9Z-octadecenoyl)-sn-glycero-3-phosphoethanolamine + H2O = 1-hexadecanoyl-sn-glycero-3-phosphoethanolamine + (9Z)-octadecenoate + H(+). It carries out the reaction 1-hexadecanoyl-2-(9Z-octadecenoyl)-sn-glycero-3-phospho-(1'-sn-glycerol) + H2O = 1-hexadecanoyl-sn-glycero-3-phospho-(1'-sn-glycerol) + (9Z)-octadecenoate + H(+). The catalysed reaction is 1,2-dihexadecanoyl-sn-glycero-3-phosphocholine + 2 H2O = sn-glycerol 3-phosphocholine + 2 hexadecanoate + 2 H(+). The enzyme catalyses 1-O-hexadecyl-2-(9Z)-octadecenoyl-sn-glycero-3-phosphocholine + H2O = 1-O-hexadecyl-sn-glycero-3-phosphocholine + (9Z)-octadecenoate + H(+). It catalyses the reaction 1-hexadecanoyl-sn-glycero-3-phosphocholine + H2O = sn-glycerol 3-phosphocholine + hexadecanoate + H(+). It carries out the reaction 1,2,3-tri-(9Z-octadecenoyl)-glycerol + H2O = di-(9Z)-octadecenoylglycerol + (9Z)-octadecenoate + H(+). The catalysed reaction is 1-hexadecanoyl-2-(9Z)-octadecenoyl-3-octadecanoyl-sn-glycerol + H2O = 1-hexadecanoyl-2-(9Z-octadecenoyl)-sn-glycerol + octadecanoate + H(+). The enzyme catalyses 1,3-dihexadecanoyl-2-(9Z-octadecenoyl)glycerol + H2O = 1,3-dihexadecanoylglycerol + (9Z)-octadecenoate + H(+). It catalyses the reaction 1,3-dihexadecanoyl-2-(9Z-octadecenoyl)glycerol + H2O = 1-hexadecanoyl-2-(9Z-octadecenoyl)-glycerol + hexadecanoate + H(+). It carries out the reaction 1-hexadecanoyl-2-(9Z)-octadecenoyl-3-octadecanoyl-sn-glycerol + H2O = 1-hexadecanoyl-3-octadecanoyl-sn-glycerol + (9Z)-octadecenoate + H(+). The catalysed reaction is 1-hexadecanoyl-2-(9Z)-octadecenoyl-3-octadecanoyl-sn-glycerol + H2O = 2-(9Z-octadecenoyl)-3-octadecanoyl-sn-glycerol + hexadecanoate + H(+). The enzyme catalyses 1-octadecanoyl-2-(9Z,12Z)-octadecadienoyl-sn-glycerol + H2O = 1-octadecanoyl-sn-glycerol + (9Z,12Z)-octadecadienoate + H(+). It catalyses the reaction 1,2-di-(9Z-octadecenoyl)-sn-glycerol + H2O = 1-(9Z-octadecenoyl)-sn-glycerol + (9Z)-octadecenoate + H(+). It carries out the reaction 2,3-di-(9Z)-octadecenoyl-sn-glycerol + H2O = 3-(9Z-octadecenoyl)-sn-glycerol + (9Z)-octadecenoate + H(+). The catalysed reaction is 1,3-di-(9Z-octadecenoyl)-glycerol + H2O = 1-(9Z-octadecenoyl)-glycerol + (9Z)-octadecenoate + H(+). The enzyme catalyses 1-(9Z-octadecenoyl)-glycerol + H2O = glycerol + (9Z)-octadecenoate + H(+). It catalyses the reaction 2-(9Z-octadecenoyl)-glycerol + H2O = glycerol + (9Z)-octadecenoate + H(+). Its function is as follows. Calcium-independent membrane-associated phospholipase that catalyzes complete diacylation of phospholipids by hydrolyzing both sn-1 and sn-2 fatty acyl chains attached to the glycerol backbone (phospholipase B activity). Has dual phospholipase and lysophospholipase activities toward diacylphospholipids. Preferentially cleaves sn-2 ester bonds over sn-1 bonds. Acts as a lipase toward glycerolipid substrates. Hydrolyzes fatty acyl chains of diacylglycerols with preference for the sn-2 position and of triacylglycerols with not positional selectivity. May also hydrolyze long chain retinyl esters such as retinyl palmitate. May contribute to digestion of dietary phospholipids, glycerolipids and retinoids, facilitating lipid absorption at the brush border. The protein is Phospholipase B1, membrane-associated (Plb1) of Mus musculus (Mouse).